The sequence spans 106 residues: Toxin-like structure LSTX-D7 (106 aa).

The N-terminal stretch at 1-20 (MMKVLVVFALLVTLISYSSS) is a signal peptide. Positions 21–41 (EGIDDLEADELLSLMANEQTR) are excised as a propeptide. 4 disulfide bridges follow: Cys45–Cys60, Cys52–Cys69, Cys59–Cys85, and Cys71–Cys83.

This sequence belongs to the neurotoxin 19 (CSTX) family. 02 (D7) subfamily. Expressed by the venom gland.

It is found in the secreted. The protein is Toxin-like structure LSTX-D7 of Lycosa singoriensis (Wolf spider).